The following is a 90-amino-acid chain: Probable Fe(2+)-trafficking protein (90 aa).

This sequence belongs to the Fe(2+)-trafficking protein family.

In terms of biological role, could be a mediator in iron transactions between iron acquisition and iron-requiring processes, such as synthesis and/or repair of Fe-S clusters in biosynthetic enzymes. The sequence is that of Probable Fe(2+)-trafficking protein from Delftia acidovorans (strain DSM 14801 / SPH-1).